The following is a 148-amino-acid chain: Snaclec stejaggregin-A subunit beta-3 (148 aa).

A signal peptide spans 1 to 23 (MGRFISVSFGLLVVFLSLSGAGA). A disulfide bridge links Cys27 with Cys38. The C-type lectin domain occupies 34–145 (YDLYCYKVFK…CSRTHYVVCK (112 aa)). N-linked (GlcNAc...) asparagine glycosylation is found at Asn47 and Asn78. Cystine bridges form between Cys55/Cys144 and Cys121/Cys136.

Belongs to the snaclec family. As to quaternary structure, heteromultimer; disulfide-linked. Expressed by the venom gland.

The protein localises to the secreted. Interferes with one step of hemostasis (modulation of platelet aggregation, or coagulation cascade, for example). This is Snaclec stejaggregin-A subunit beta-3 from Trimeresurus stejnegeri (Chinese green tree viper).